The primary structure comprises 92 residues: Small ribosomal subunit protein uS19 (92 aa).

Belongs to the universal ribosomal protein uS19 family.

In terms of biological role, protein S19 forms a complex with S13 that binds strongly to the 16S ribosomal RNA. The sequence is that of Small ribosomal subunit protein uS19 from Bartonella quintana (strain Toulouse) (Rochalimaea quintana).